We begin with the raw amino-acid sequence, 1159 residues long: RAD51-associated protein 2 (1159 aa).

Residues 1 to 35 are disordered; that stretch reads MSLPQPTPRMAELRKPTSSLTPPEDPDSQPPSSKR. The interval 1111–1159 is interaction with RAD51; sequence SHFPHGISRVRPLKTCSRPIRIGLSRKARIKQLHPYLKQMCYGNLKENF.

In terms of assembly, interacts with RAD51. In terms of tissue distribution, specifically expressed in meiotic tissues. Highly expressed in testis.

The protein is RAD51-associated protein 2 (RAD51AP2) of Homo sapiens (Human).